Here is a 199-residue protein sequence, read N- to C-terminus: dITP/XTP pyrophosphatase (199 aa).

7 to 12 (SNNRGK) serves as a coordination point for substrate. Positions 39 and 68 each coordinate Mg(2+). Asp68 functions as the Proton acceptor in the catalytic mechanism. Residues Ala69, 154–157 (FGFD), Lys177, and 182–183 (HR) each bind substrate.

Belongs to the HAM1 NTPase family. As to quaternary structure, homodimer. Requires Mg(2+) as cofactor.

It carries out the reaction XTP + H2O = XMP + diphosphate + H(+). It catalyses the reaction dITP + H2O = dIMP + diphosphate + H(+). The catalysed reaction is ITP + H2O = IMP + diphosphate + H(+). Pyrophosphatase that catalyzes the hydrolysis of nucleoside triphosphates to their monophosphate derivatives, with a high preference for the non-canonical purine nucleotides XTP (xanthosine triphosphate), dITP (deoxyinosine triphosphate) and ITP. Seems to function as a house-cleaning enzyme that removes non-canonical purine nucleotides from the nucleotide pool, thus preventing their incorporation into DNA/RNA and avoiding chromosomal lesions. This is dITP/XTP pyrophosphatase from Paracidovorax citrulli (strain AAC00-1) (Acidovorax citrulli).